The following is a 137-amino-acid chain: Large ribosomal subunit protein uL16 (137 aa).

The protein belongs to the universal ribosomal protein uL16 family. Part of the 50S ribosomal subunit.

Functionally, binds 23S rRNA and is also seen to make contacts with the A and possibly P site tRNAs. The polypeptide is Large ribosomal subunit protein uL16 (Afipia carboxidovorans (strain ATCC 49405 / DSM 1227 / KCTC 32145 / OM5) (Oligotropha carboxidovorans)).